A 333-amino-acid polypeptide reads, in one-letter code: tRNA dimethylallyltransferase (333 aa).

Residue 23-30 (GPTGAGKT) participates in ATP binding. Residue 25-30 (TGAGKT) participates in substrate binding. Interaction with substrate tRNA regions lie at residues 53-56 (DSAL) and 177-181 (QRVQR).

This sequence belongs to the IPP transferase family. As to quaternary structure, monomer. Mg(2+) is required as a cofactor.

The catalysed reaction is adenosine(37) in tRNA + dimethylallyl diphosphate = N(6)-dimethylallyladenosine(37) in tRNA + diphosphate. Catalyzes the transfer of a dimethylallyl group onto the adenine at position 37 in tRNAs that read codons beginning with uridine, leading to the formation of N6-(dimethylallyl)adenosine (i(6)A). The protein is tRNA dimethylallyltransferase of Polynucleobacter asymbioticus (strain DSM 18221 / CIP 109841 / QLW-P1DMWA-1) (Polynucleobacter necessarius subsp. asymbioticus).